A 199-amino-acid chain; its full sequence is Protein ASYMMETRIC LEAVES 2 (199 aa).

Positions S8–L109 constitute an LOB domain.

The protein belongs to the LOB domain-containing protein family. In terms of assembly, homo- and heterodimer with AS1. Interacts with AS1. Part of the AS1 repressor complex composed of AS1, LBD6/AS2 and HDA6. Interacts with LFR. In terms of tissue distribution, expressed in young shoots, roots, stems, leaves, flowers and adaxial domains of cotyledonary and leaves primordia.

It localises to the nucleus. Its function is as follows. Negative regulator of cell proliferation in the adaxial side of leaves. Regulates the formation of a symmetric lamina and the establishment of venation. Positively regulates LATERAL ORGAN BOUNDARIES (LOB) within the shoot apex, and the class III HD-ZIP genes REV, PHB, and PHV. Interacts directly with ASYMMETRIC LEAVES 1 (AS1) to repress the knox homeobox genes KNAT1, KNAT2, and KNAT6 and the abaxial determinants ARF3, KAN2 and YAB5. May act in parallel with the RDR6-SGS3-AGO7 pathway, an endogenous RNA silencing pathway, to regulate the leaf morphogenesis. Required for the binding of AS1 to the KNOX genes. Involved in leaf polarity establishment by functioning cooperatively with RH10 or RID2 to repress abaxial genes ARF3, ARF4, KAN1, KAN2, YAB1 and YAB5, and the knox homeobox genes KNAT1, KNAT2, KNAT6, and STM to promote adaxial development in leaf primordia at shoot apical meristems at high temperatures. The sequence is that of Protein ASYMMETRIC LEAVES 2 from Arabidopsis thaliana (Mouse-ear cress).